Reading from the N-terminus, the 359-residue chain is Ribosome biogenesis protein BRX1 homolog (359 aa).

Over residues 1-12 (MGRKFQNKKKKA) the composition is skewed to basic residues. Residues 1 to 42 (MGRKFQNKKKKAAPQLEIVPLDENPPLPPQRSSDDVVPKKAR) are disordered. The Brix domain maps to 50-241 (QRVLVFSARG…PVKIFDGSFT (192 aa)).

The protein belongs to the BRX1 family.

The protein resides in the nucleus. The protein localises to the nucleolus. In terms of biological role, required for biogenesis of the 60S ribosomal subunit. The chain is Ribosome biogenesis protein BRX1 homolog from Drosophila melanogaster (Fruit fly).